The chain runs to 255 residues: Electron transfer flavoprotein subunit beta (255 aa).

The residue at position 2 (Ala-2) is an N-acetylalanine. AMP-binding positions include Ala-9, 39–42 (NPFC), Cys-66, and 123–134 (GKQAIDDDCNQT). A recognition loop region spans residues 183 to 205 (ADLRLNEPRYATLPNIMKAKKKK). Lys-200 carries the N6,N6,N6-trimethyllysine; by ETFBKMT; alternate modification. Lys-200 bears the N6-acetyllysine; alternate mark. Lys-200 is subject to N6-methyllysine; alternate. Lys-203 bears the N6,N6,N6-trimethyllysine; by ETFBKMT mark. Residue Lys-210 is modified to N6-acetyllysine; alternate. Lys-210 bears the N6-succinyllysine; alternate mark. Phosphoserine is present on residues Ser-223 and Ser-226. Lys-238 is modified (N6-acetyllysine). Lys-248 is subject to N6-acetyllysine; alternate. Position 248 is an N6-succinyllysine; alternate (Lys-248).

It belongs to the ETF beta-subunit/FixA family. Heterodimer composed of ETFA and ETFB. Identified in a complex that contains ETFA, ETFB and ETFRF1. Interacts with ACADM. Methylated. Trimethylation at Lys-200 and Lys-203 may negatively regulate the activity in electron transfer from acyl-CoA dehydrogenases.

The protein resides in the mitochondrion matrix. Functionally, heterodimeric electron transfer flavoprotein that accepts electrons from several mitochondrial dehydrogenases, including acyl-CoA dehydrogenases, glutaryl-CoA and sarcosine dehydrogenase. It transfers the electrons to the main mitochondrial respiratory chain via ETF-ubiquinone oxidoreductase. Required for normal mitochondrial fatty acid oxidation and normal amino acid metabolism. ETFB binds an AMP molecule that probably has a purely structural role. The sequence is that of Electron transfer flavoprotein subunit beta from Bos taurus (Bovine).